The primary structure comprises 158 residues: Urease subunit beta (158 aa).

The disordered stretch occupies residues 113–158; sequence EDDWRRSSAAGDAPQELPQVEAAERGRKLDEATDVGTEDTPEEGQN. The segment covering 134-143 has biased composition (basic and acidic residues); sequence AAERGRKLDE. Residues 144–158 show a composition bias toward acidic residues; that stretch reads ATDVGTEDTPEEGQN.

It belongs to the urease beta subunit family. Heterotrimer of UreA (gamma), UreB (beta) and UreC (alpha) subunits. Three heterotrimers associate to form the active enzyme.

The protein localises to the cytoplasm. It carries out the reaction urea + 2 H2O + H(+) = hydrogencarbonate + 2 NH4(+). The protein operates within nitrogen metabolism; urea degradation; CO(2) and NH(3) from urea (urease route): step 1/1. This is Urease subunit beta from Corynebacterium glutamicum (strain R).